A 58-amino-acid polypeptide reads, in one-letter code: Enterocin-HF (58 aa).

Positions 1-15 (MEKLTVKEMSQVVGG) are excised as a propeptide. Cysteines 24 and 29 form a disulfide.

The protein localises to the secreted. In terms of biological role, bacteriocin. The sequence is that of Enterocin-HF (entHF) from Enterococcus faecium (Streptococcus faecium).